Consider the following 471-residue polypeptide: uncharacterized protein (471 aa).

4 consecutive transmembrane segments (helical) span residues 10–30 (ALWLLDFLTFNISFLLSLFVI), 46–66 (IDDRTYIHAVLAGICVGWFAI), 87–107 (TLIIFAIFELAIVAFPKLYFS), and 280–300 (IVVGSLAIIIFSPVLLYLYFA).

This sequence belongs to the bacterial sugar transferase family.

It is found in the cell membrane. The protein operates within glycan metabolism; exopolysaccharide biosynthesis. Its function is as follows. May function as a sugar transferase. This is an uncharacterized protein from Haemophilus influenzae (strain ATCC 51907 / DSM 11121 / KW20 / Rd).